A 373-amino-acid chain; its full sequence is Queuine tRNA-ribosyltransferase (373 aa).

Aspartate 90 serves as the catalytic Proton acceptor. Substrate contacts are provided by residues 90 to 94 (DSGGF), aspartate 144, glutamine 193, and glycine 220. The segment at 251-257 (GVGTPED) is RNA binding. The active-site Nucleophile is aspartate 270. The RNA binding; important for wobble base 34 recognition stretch occupies residues 275–279 (TRNAR). Zn(2+)-binding residues include cysteine 308, cysteine 310, cysteine 313, and histidine 339.

This sequence belongs to the queuine tRNA-ribosyltransferase family. As to quaternary structure, homodimer. Within each dimer, one monomer is responsible for RNA recognition and catalysis, while the other monomer binds to the replacement base PreQ1. The cofactor is Zn(2+).

The enzyme catalyses 7-aminomethyl-7-carbaguanine + guanosine(34) in tRNA = 7-aminomethyl-7-carbaguanosine(34) in tRNA + guanine. It functions in the pathway tRNA modification; tRNA-queuosine biosynthesis. Functionally, catalyzes the base-exchange of a guanine (G) residue with the queuine precursor 7-aminomethyl-7-deazaguanine (PreQ1) at position 34 (anticodon wobble position) in tRNAs with GU(N) anticodons (tRNA-Asp, -Asn, -His and -Tyr). Catalysis occurs through a double-displacement mechanism. The nucleophile active site attacks the C1' of nucleotide 34 to detach the guanine base from the RNA, forming a covalent enzyme-RNA intermediate. The proton acceptor active site deprotonates the incoming PreQ1, allowing a nucleophilic attack on the C1' of the ribose to form the product. After dissociation, two additional enzymatic reactions on the tRNA convert PreQ1 to queuine (Q), resulting in the hypermodified nucleoside queuosine (7-(((4,5-cis-dihydroxy-2-cyclopenten-1-yl)amino)methyl)-7-deazaguanosine). The protein is Queuine tRNA-ribosyltransferase of Campylobacter jejuni subsp. doylei (strain ATCC BAA-1458 / RM4099 / 269.97).